The chain runs to 408 residues: Probable ethanolamine permease EutH (408 aa).

11 consecutive transmembrane segments (helical) span residues 1 to 21 (MGIN…AAVD), 61 to 81 (AMVG…PVII), 89 to 109 (ANPS…FFLA), 126 to 146 (ILGS…LGII), 155 to 175 (ALGV…GGLI), 192 to 212 (FALI…VALG), 230 to 250 (FLVA…LLGW), 274 to 294 (IEVI…VLLL), 313 to 333 (NIAA…FGMM), 342 to 362 (VINC…LGFA), and 369 to 389 (MIFP…GVAM).

This sequence belongs to the EutH family.

It localises to the cell inner membrane. It catalyses the reaction ethanolamine(in) = ethanolamine(out). It participates in amine and polyamine degradation; ethanolamine degradation. Its function is as follows. Probably involved in the diffusion of protonated ethanolamine (EA) into the cell at low pH. At low pH most EA is protonated, and this permease becomes necessary. Contributes to bacterial survival and replication in acidified macrophage vacuoles, but not to bacterial uptake by macrophages. Functionally, expression of the eut operon allows this bacteria to use ethanolamine (EA) as a carbon, nitrogen and energy source. It relies on cobalamin (vitamin B12) both as a cofactor for the ethanolamine ammonia-lyase (EAL) activity and to induce the operon. EA enhances bacterial survival in macrophages in a concentration-dependent manner, suggesting it is an important nutrient during infection. In Salmonella typhimurium (strain LT2 / SGSC1412 / ATCC 700720), this protein is Probable ethanolamine permease EutH.